The sequence spans 648 residues: DNA ligase (648 aa).

NAD(+) contacts are provided by residues 63–67 (DILYD) and 105–106 (ST). Lysine 143 serves as the catalytic N6-AMP-lysine intermediate. NAD(+) contacts are provided by arginine 159, glutamate 190, and lysine 302. The Zn(2+) site is built by cysteine 390, cysteine 393, cysteine 406, and cysteine 412. A BRCT domain is found at 570–648 (SLASPLTGKI…SEQEYLDLIS (79 aa)).

This sequence belongs to the NAD-dependent DNA ligase family. LigA subfamily. The cofactor is Mg(2+). Mn(2+) is required as a cofactor.

It carries out the reaction NAD(+) + (deoxyribonucleotide)n-3'-hydroxyl + 5'-phospho-(deoxyribonucleotide)m = (deoxyribonucleotide)n+m + AMP + beta-nicotinamide D-nucleotide.. Its function is as follows. DNA ligase that catalyzes the formation of phosphodiester linkages between 5'-phosphoryl and 3'-hydroxyl groups in double-stranded DNA using NAD as a coenzyme and as the energy source for the reaction. It is essential for DNA replication and repair of damaged DNA. The protein is DNA ligase of Shewanella baltica (strain OS155 / ATCC BAA-1091).